A 279-amino-acid chain; its full sequence is 2-dehydro-3-deoxyphosphooctonate aldolase (279 aa).

Belongs to the KdsA family.

The protein resides in the cytoplasm. It carries out the reaction D-arabinose 5-phosphate + phosphoenolpyruvate + H2O = 3-deoxy-alpha-D-manno-2-octulosonate-8-phosphate + phosphate. It functions in the pathway carbohydrate biosynthesis; 3-deoxy-D-manno-octulosonate biosynthesis; 3-deoxy-D-manno-octulosonate from D-ribulose 5-phosphate: step 2/3. Its pathway is bacterial outer membrane biogenesis; lipopolysaccharide biosynthesis. The protein is 2-dehydro-3-deoxyphosphooctonate aldolase of Desulfosudis oleivorans (strain DSM 6200 / JCM 39069 / Hxd3) (Desulfococcus oleovorans).